The primary structure comprises 144 residues: Large ribosomal subunit protein uL15 (144 aa).

The disordered stretch occupies residues 1–58 (MRLNELAPEPGSRPSAKRVGRGIGSGLGKTGGRGHKGLKSRSGGSVAPGFEGGQQPLA). The segment covering 21–31 (RGIGSGLGKTG) has biased composition (gly residues).

The protein belongs to the universal ribosomal protein uL15 family. Part of the 50S ribosomal subunit.

Its function is as follows. Binds to the 23S rRNA. The chain is Large ribosomal subunit protein uL15 from Marinobacter nauticus (strain ATCC 700491 / DSM 11845 / VT8) (Marinobacter aquaeolei).